Here is a 277-residue protein sequence, read N- to C-terminus: Large ribosomal subunit protein uL2 (277 aa).

The disordered stretch occupies residues 222–277 (GVTMNPVDHPHGGGEGRTSGGRHPVTPWGKPTKGKKTRSNKSTNKFILISRHKRKK).

Belongs to the universal ribosomal protein uL2 family. In terms of assembly, part of the 50S ribosomal subunit. Forms a bridge to the 30S subunit in the 70S ribosome.

One of the primary rRNA binding proteins. Required for association of the 30S and 50S subunits to form the 70S ribosome, for tRNA binding and peptide bond formation. It has been suggested to have peptidyltransferase activity; this is somewhat controversial. Makes several contacts with the 16S rRNA in the 70S ribosome. The polypeptide is Large ribosomal subunit protein uL2 (Rhodopseudomonas palustris (strain BisB18)).